The sequence spans 541 residues: Developmental and secondary metabolism regulator VEL1 (541 aa).

The region spanning 26-220 (NRHLWYQLTV…ADQGCRVRIR (195 aa)) is the Velvet domain. A Nuclear localization signal motif is present at residues 40–45 (ERARAC). Disordered regions lie at residues 222–447 (DVRM…MPTQ) and 464–483 (PIEA…TGGK). Residues 230–244 (GKGSGYDRREEEYAR) are compositionally biased toward basic and acidic residues. A compositionally biased stretch (low complexity) spans 289 to 298 (APSLPHAPSL). 3 stretches are compositionally biased toward pro residues: residues 299–314 (PHAP…PPAA), 345–355 (APIPPVTPTGP), and 425–439 (SPAP…PAPS). The tract at residues 444–472 (MPTQSSLAPLKIASLVSPLPPIEAQTEPL) is PEST.

This sequence belongs to the velvet family. VeA subfamily. Component of the heterotrimeric velvet complex composed of LAE1, VEL1 and VEL2; VEL1 acting as a bridging protein between LAE1 and VEL2.

The protein localises to the nucleus. It localises to the cytoplasm. In terms of biological role, component of the velvet transcription factor complex that controls sexual/asexual developmental ratio in response to light, promoting sexual development in the darkness while stimulating asexual sporulation under illumination. The velvet complex acts as a global regulator for secondary metabolite gene expression. Controls the expression of the gliotoxin gene cluster. Plays a key role in mycoparasitism. In Hypocrea virens (strain Gv29-8 / FGSC 10586) (Gliocladium virens), this protein is Developmental and secondary metabolism regulator VEL1.